The following is a 302-amino-acid chain: tRNA pseudouridine synthase B (302 aa).

Residue Asp-45 is the Nucleophile of the active site.

Belongs to the pseudouridine synthase TruB family. Type 1 subfamily.

The enzyme catalyses uridine(55) in tRNA = pseudouridine(55) in tRNA. Responsible for synthesis of pseudouridine from uracil-55 in the psi GC loop of transfer RNAs. The protein is tRNA pseudouridine synthase B of Francisella tularensis subsp. novicida (strain U112).